We begin with the raw amino-acid sequence, 336 residues long: Cytoskeleton protein RodZ (336 aa).

The Cytoplasmic portion of the chain corresponds to 1-111; the sequence is MNTEATHDQN…LGKRRKKRDG (111 aa). In terms of domain architecture, HTH cro/C1-type spans 19–71; that stretch reads LRNAREQLGLSQQAVAERLCLKVSTVRDIEEDKAPADLASTFLRGYIRSYARL. The H-T-H motif DNA-binding region spans 30-49; sequence QQAVAERLCLKVSTVRDIEE. A helical; Signal-anchor for type II membrane protein transmembrane segment spans residues 112-132; that stretch reads WLMTFTWLVLFVVIGLSGAWW. Topologically, residues 133–336 are periplasmic; sequence WQDHKAQQEE…TLNAEQSPAQ (204 aa). Residues 148 to 164 are compositionally biased toward polar residues; it reads DQSSAELNNNQSQSVPL. The disordered stretch occupies residues 148-245; sequence DQSSAELNNN…PLPTDQAGVT (98 aa). Low complexity predominate over residues 165–201; sequence DTSTTTDQAMATTPTSPVDTTATNTQTPAATTAPSPT. Residues 202–217 are compositionally biased toward polar residues; that stretch reads VDSQQNAVVPPSQANV. Residues 218 to 240 are compositionally biased toward low complexity; that stretch reads DTAATPAPAATTTPDGAAPLPTD.

Belongs to the RodZ family.

It localises to the cell inner membrane. Its function is as follows. Cytoskeletal protein that is involved in cell-shape control through regulation of the length of the long axis. This Escherichia coli O7:K1 (strain IAI39 / ExPEC) protein is Cytoskeleton protein RodZ.